A 2646-amino-acid polypeptide reads, in one-letter code: MSTCCWCTPGGSSTIDVLKRYASSTGSSEFQTADEDLCYCLECVAEYHRARDEVPFLHEVLWELETLRLVSHFEKSMKAEAEDDDDLYIVDNNGEEQLFDCSGQDFENKLRVPLFEILKYPYLLLHERVNELCVEALCRMEQNNCSFQVFDKYPGIYLFLVHPNEMVRRWAILTARNLGKVDRDDYYDLQEVLTCLFKVIELGLLESPDIYTSSVLEKGKLILLPAHMYDTTNYKNYWLGICMLLTILEEQAMDSLLLGSDKQNDFMQSILHTMEKQSDDDSMDPFWPALHCFMVILDRLGSKVWGQLIDPIEAFQTIINNESYNREIQNIRNSSIRTKLEPEPHFDDMVTCSQIVYNFNPEKTKKDSGWRSAICPDYCPNMYEEMETLANVLQSDIGQDMRVHNSTFLWFIPFVQSLMDLKDLGVAYIVEVIHHLYSEVKDVLNQTDAVCDKVTEFFILILISVIELHRNKKCLHLLWVSSQQWVEAVVKCAKLPTTAFVRSCEKSPGSTSRGAAIMSSLALHSVQSNSVQLACVQLIRGLLKEGYQLGQQTLCKRFWDKLNLFLRGNLSLGWQLTGQETHELQMCLKQIIRNIKFKMPQYSTFGDSTSTFKTPPSFKEESDKIDRKHKKNIYCLENCSPVSSKEPMKADTHRVLMKVNTTEEENFKQHYIDLNEEEQEPLPAELCLKQKSEALFSESAQEQVKISAEKSGKESSSYAPSNSTSRNGPEWGCDRGVIMSAHSLTDSSSDFMEQVSTSNEDVSLKDGSVGKTSKPSFKLQKDEICAKLSHVIKKQIRKSTLVDNIIDLEENTAISDLENCSGTDGGALKEDSIGHNVPSDPVLDDKHEEQKSQNSSLFKKEIKSEELDNSSSDDEDKLQIQEGRADDDLVSFTEVTDTLVKAPCEGHVKMVVESRDKEMRESTALTSNLVEGQVPHDSSKPLVAGRQIDLCNITLISQTTVIQFPSGLSKQNSFQLQKGDKRCLTANQNSAATCRGQVIVISDSDEEEDEDEDERSSSEENIKQSKACIGKDCSEHRSLAVNASVEKQLVKEEERYPVEFEDSESQVFEFESSSEVFSVWQDHKIDSKNSLQGEQKSYVTHVADSTNNNLGCGDSVSEEVVRNKAEGVKEHAGPHSSVSAEEFCKTGVKKPKRKRYDKVTAEDPQRPSSSVGTDQLPDRRDLTESDLKSADMGMATPSSSVERDSTILQKSTKSRTHSKPVRKVPASKATKKTHSDTRRGQSKSSCYISCRTSPAIVPPKKLRQCPEPTSTVEKLGLKKAPRKAFELSQRSLECIVQLRDHGKTVGVVDAPKKAKLISPQTLSIKNNKKLLTSQDLQFQRLMRSRSHKKRDFDYKNTDTVRVSRIVQGSDVLEADSDEPDDHRVSEPLAISNEKQLAKCMLSKTEVAEASSDPWVTGITCLVNQCESRVLSGGVPTDVVMVSASEDPVDGGAVTVQVGEVASVKAAEPASSSDTDDDDNLFLTQHDPQDMDLCSQLENKTIIVAHKKDTVQREDSLSRPQLESLSITKCKYKDCVETTKNQGEYCPRHSEAKAADDGLFRKPGLPLSVARPLRPTTTKIFSSSSASRTANLSKSLESTTLQQSALKNKSSGAQPNLKVTPPSSMGSQKPVAEVKSLCNIFHFQTPSSSSKQSCKLTFSENRPTSAASPVNILLPSQSIFDTFIKEVLKWKYQMFLNFDKCGAPTSLCQSISRPVPVRFQDCAEYFNVFLPLIILNAFETVAQEWLSSPNKENFYQLQLRKFPADYKKYWEFLIYLNESELAKQLHPKENDLVFLAPEKSYMDRHGMQDCSHYYCGYVHKFRRTSVMRSGKAECSLCIQTQDTLPASVKNLTRCIVISSLVTTQRKLKAMSLLSSRNQLARAVLNPNPMDFCTKDLLTTTSERIVAYLKDFNEDQKKAIETAYAMVKHSPSVAKICLIHGPPGTGKSKTIVGLLYRLLTENQRKGHSDENFNAKIKQNRVLVCAPSNAAVDELMKKIILEFKEKCKDKKNPLGNCGDINLVRLGPEKSINTEVLKFSLDSQVNHRMKKDLPSHIQEMLRRKEILDAQLDELSRQRALCRGGREMQRQELDEHIAIVSKERQELASKIKEVQGRPQRAQNTIILESHVICCTLSTSGGLLLESAFRGQGGVPFSCVIVDEAGQSCEVETLSPLIHRCNKLILVGDPKQLPPTVISMKAQEYGYDQSMMARFCKLLEENVEQNMIGRLPVLQLTIQYRMHPDICLFPSNYVYNKNLKTNRLTESIRCSSEWPFQPYLVFDVGDGSERRDNDSYINVQEIKLVMEIIKLIKEKRKDISFRNIGIITHYKAQKTMIQKDLEKEFDKKGPAEVDTVDAFQGRQKDCIIVTCVRASAVQGSIGFLASLQRLNVTITRAKYSLFILGHLRTLMENQHWYELIQDAQKRGAIIKTSDPNYRHDAMKILKLKPVLQRSLTHPPATAPEAPRPQGGLPSNRLDSGLATTSFAASLYHTPSDTVTSKGPERPLLQDRLRDPRLLRRLDAEAKGTFLKDPQPVSPQLPGVVHLLGEPGFPVVFQDLGFVVPPSTAIVAPLGSHRSPMQAEPPPAHPAAAASTSKRKYSDPDAGLSHKREPRAFSGEQGRHGSVTHHVLRSTDWDRRRLDDSSAKRRQFL.

Position 102 is a phosphoserine (serine 102). Lysine 339 participates in a covalent cross-link: Glycyl lysine isopeptide (Lys-Gly) (interchain with G-Cter in SUMO1). Residue serine 640 is modified to Phosphoserine. Disordered stretches follow at residues 705–734 (KISAEKSGKESSSYAPSNSTSRNGPEWGCD) and 825–876 (GGAL…DDED). Residues 714–727 (ESSSYAPSNSTSRN) are compositionally biased toward polar residues. Residues 867–876 (LDNSSSDDED) show a composition bias toward acidic residues. Residues serine 870, serine 871, serine 872, serine 938, serine 1002, and serine 1004 each carry the phosphoserine modification. The disordered stretch occupies residues 1001 to 1023 (ISDSDEEEDEDEDERSSSEENIK). Residues 1003-1014 (DSDEEEDEDEDE) show a composition bias toward acidic residues. Residue lysine 1051 forms a Glycyl lysine isopeptide (Lys-Gly) (interchain with G-Cter in SUMO2) linkage. Basic and acidic residues predominate over residues 1122–1133 (RNKAEGVKEHAG). Residues 1122 to 1245 (RNKAEGVKEH…DTRRGQSKSS (124 aa)) are disordered. A compositionally biased stretch (basic residues) spans 1147 to 1156 (GVKKPKRKRY). The span at 1176–1189 (LPDRRDLTESDLKS) shows a compositional bias: basic and acidic residues. Residues 1196 to 1211 (TPSSSVERDSTILQKS) are compositionally biased toward polar residues. The span at 1212 to 1222 (TKSRTHSKPVR) shows a compositional bias: basic residues. Serine 1318 carries the post-translational modification Phosphoserine. Residues lysine 1328, lysine 1329, and lysine 1398 each participate in a glycyl lysine isopeptide (Lys-Gly) (interchain with G-Cter in SUMO2) cross-link. Serine 1472 carries the post-translational modification Phosphoserine. Threonine 1474 bears the Phosphothreonine mark. Residues 1591–1627 (LSKSLESTTLQQSALKNKSSGAQPNLKVTPPSSMGSQ) form a disordered region. Residues 1595–1613 (LESTTLQQSALKNKSSGAQ) show a composition bias toward polar residues. 1939 to 1946 (GPPGTGKS) is an ATP binding site. The Bipartite nuclear localization signal signature appears at 2046–2063 (KKDLPSHIQEMLRRKEIL). Threonine 2450 is modified (phosphothreonine). Disordered regions lie at residues 2450–2472 (THPPATAPEAPRPQGGLPSNRLD), 2486–2506 (HTPSDTVTSKGPERPLLQDRL), and 2569–2624 (SHRS…THHV). 2 stretches are compositionally biased toward basic and acidic residues: residues 2496-2506 (GPERPLLQDRL) and 2593-2608 (KYSDPDAGLSHKREPR). The interval 2632–2646 (RRRLDDSSAKRRQFL) is necessary for nuclear localization.

It belongs to the DNA2/NAM7 helicase family. Homodimer. Interacts with PER2; the interaction inhibits termination of circadian target genes. Interacts with CHD4, POLR2A, PRKDC and TRIM28. Interacts with UBE2I. Interacts (via N-terminus domain) with EXOSC9 (via C-terminus region); the interaction enhances SETX sumoylation. Interacts with NCL (via N-terminus domain). Interacts with PABPN1, PABPC1 and SF3B1. Interacts with SMN1/SMN2 and POLR2A; SMN1/SMN2 recruits SETX to POLR2A. Post-translationally, ubiquitinated. In terms of processing, sumoylated preferentially with SUMO2 or SUMO3. As to expression, expressed in cerebellum, hippocampus, olfactory bulb, Bergmann glial fibers, stellate cells and Purkinje cells. Expressed in the epithelial cells of the lens but not in mature lens fiber cells. Expressed in the retina (highly expressed in inner and outer segments of photoreceptors and outer plexiform layer cells but weakly expressed in the inner plexiform and ganglion cell layers). Expressed in the kidney.

The protein localises to the nucleus. It localises to the nucleoplasm. The protein resides in the nucleolus. It is found in the cytoplasm. Its subcellular location is the chromosome. The protein localises to the telomere. It localises to the cell projection. The protein resides in the axon. It is found in the growth cone. Its function is as follows. Probable RNA/DNA helicase involved in diverse aspects of RNA metabolism and genomic integrity. Plays a role in transcription regulation by its ability to modulate RNA Polymerase II (Pol II) binding to chromatin and through its interaction with proteins involved in transcription. Contributes to the mRNA splicing efficiency and splice site selection. Required for the resolution of R-loop RNA-DNA hybrid formation at G-rich pause sites located downstream of the poly(A) site, allowing XRN2 recruitment and XRN2-mediated degradation of the downstream cleaved RNA and hence efficient RNA polymerase II (RNAp II) transcription termination. Required for the 3' transcriptional termination of PER1 and CRY2, thus playing an important role in the circadian rhythm regulation. Involved in DNA double-strand breaks damage response generated by oxidative stress. In association with RRP45, targets the RNA exosome complex to sites of transcription-induced DNA damage. Plays a role in the development and maturation of germ cells: essential for male meiosis, acting at the interface of transcription and meiotic recombination, and in the process of gene silencing during meiotic sex chromosome inactivation (MSCI). Plays a role in neurite outgrowth in hippocampal cells through FGF8-activated signaling pathways. Inhibits retinoic acid-induced apoptosis. May be involved in telomeric stability through the regulation of telomere repeat-containing RNA (TERRA) transcription. This chain is Probable helicase senataxin, found in Mus musculus (Mouse).